The sequence spans 352 residues: Chalcone synthase C (352 aa).

C170 is a catalytic residue.

The protein belongs to the thiolase-like superfamily. Chalcone/stilbene synthases family.

The catalysed reaction is (E)-4-coumaroyl-CoA + 3 malonyl-CoA + 3 H(+) = 2',4,4',6'-tetrahydroxychalcone + 3 CO2 + 4 CoA. The protein operates within secondary metabolite biosynthesis; flavonoid biosynthesis. In terms of biological role, the primary product of this enzyme is 4,2',4',6'-tetrahydroxychalcone (also termed naringenin-chalcone or chalcone) which can under specific conditions spontaneously isomerize into naringenin. This is Chalcone synthase C (CHSC) from Ipomoea purpurea (Common morning glory).